Here is an 85-residue protein sequence, read N- to C-terminus: Small ribosomal subunit protein uS17 (85 aa).

It belongs to the universal ribosomal protein uS17 family. Part of the 30S ribosomal subunit.

Functionally, one of the primary rRNA binding proteins, it binds specifically to the 5'-end of 16S ribosomal RNA. The polypeptide is Small ribosomal subunit protein uS17 (Anaeromyxobacter sp. (strain Fw109-5)).